Reading from the N-terminus, the 230-residue chain is Demethylmenaquinone methyltransferase (230 aa).

S-adenosyl-L-methionine is bound by residues threonine 62, aspartate 80, aspartate 102–glycine 103, and serine 119.

This sequence belongs to the class I-like SAM-binding methyltransferase superfamily. MenG/UbiE family.

The enzyme catalyses a 2-demethylmenaquinol + S-adenosyl-L-methionine = a menaquinol + S-adenosyl-L-homocysteine + H(+). It functions in the pathway quinol/quinone metabolism; menaquinone biosynthesis; menaquinol from 1,4-dihydroxy-2-naphthoate: step 2/2. Methyltransferase required for the conversion of demethylmenaquinol (DMKH2) to menaquinol (MKH2). In Streptomyces griseus subsp. griseus (strain JCM 4626 / CBS 651.72 / NBRC 13350 / KCC S-0626 / ISP 5235), this protein is Demethylmenaquinone methyltransferase.